Consider the following 659-residue polypeptide: Pentatricopeptide repeat-containing protein At3g48810 (659 aa).

PPR repeat units follow at residues 75–109, 110–144, 145–179, 180–214, 215–243, 245–279, 280–314, 315–350, 351–385, 386–420, 421–455, 456–490, 492–526, 527–561, 562–598, and 599–633; these read TPLT…GFHC, SEDL…GCDP, SVKI…GFEP, NVFT…GCCP, DAVS…ERFE, VVSV…GISP, NVIS…GCHP, NIYT…GLQP, NVVA…GCSP, NIRT…GCCP, NVVV…NCAP, SVPT…HRCP, NIVT…GVEW, SSST…GKSP, DEIT…KWRP, and DVIS…GIVP.

This sequence belongs to the PPR family. P subfamily.

The protein is Pentatricopeptide repeat-containing protein At3g48810 of Arabidopsis thaliana (Mouse-ear cress).